Here is a 94-residue protein sequence, read N- to C-terminus: Protein RnfH (94 aa).

The protein belongs to the UPF0125 (RnfH) family.

This Sodalis glossinidius (strain morsitans) protein is Protein RnfH.